A 372-amino-acid chain; its full sequence is Heat-inducible transcription repressor HrcA (372 aa).

The protein belongs to the HrcA family.

In terms of biological role, negative regulator of class I heat shock genes (grpE-dnaK-dnaJ and groELS operons). Prevents heat-shock induction of these operons. This is Heat-inducible transcription repressor HrcA from Chloroflexus aurantiacus (strain ATCC 29366 / DSM 635 / J-10-fl).